A 319-amino-acid polypeptide reads, in one-letter code: NADH-ubiquinone oxidoreductase chain 1 (319 aa).

Helical transmembrane passes span 5–25, 72–92, 102–122, 146–166, 173–193, 225–245, 254–274, and 295–315; these read TINS…LTLM, LLIS…TPIP, LGLL…LWAG, VTLG…TMQL, FTWL…STLA, FFLT…ILFI, ELFL…FLWI, and LPLT…TSGI.

It belongs to the complex I subunit 1 family.

The protein localises to the mitochondrion inner membrane. It carries out the reaction a ubiquinone + NADH + 5 H(+)(in) = a ubiquinol + NAD(+) + 4 H(+)(out). In terms of biological role, core subunit of the mitochondrial membrane respiratory chain NADH dehydrogenase (Complex I) that is believed to belong to the minimal assembly required for catalysis. Complex I functions in the transfer of electrons from NADH to the respiratory chain. The immediate electron acceptor for the enzyme is believed to be ubiquinone. This is NADH-ubiquinone oxidoreductase chain 1 (MT-ND1) from Varanus flavescens (Yellow monitor).